A 118-amino-acid chain; its full sequence is uncharacterized protein (118 aa).

4 helical membrane-spanning segments follow: residues 12–32 (IISL…FATF), 39–59 (LMPH…SLFI), 63–83 (IIGY…CPTI), and 98–118 (SAHL…VILF).

The protein resides in the cell membrane. This is an uncharacterized protein from Methanocaldococcus jannaschii (strain ATCC 43067 / DSM 2661 / JAL-1 / JCM 10045 / NBRC 100440) (Methanococcus jannaschii).